The sequence spans 366 residues: Isocitrate dehydrogenase [NAD] subunit alpha, mitochondrial (366 aa).

The N-terminal 27 residues, 1-27 (MAGPAWISKVSRLLGAFHNQKQVTRGF), are a transit peptide targeting the mitochondrion. Lys77 is modified (N6-succinyllysine). Position 101 is a phosphothreonine (Thr101). Arg115, Arg125, and Arg146 together coordinate substrate. N6-acetyllysine is present on Lys223. Residues Asp233, Asp257, and Asp261 each coordinate Mg(2+). An N6-acetyllysine; alternate modification is found at Lys343. N6-succinyllysine; alternate is present on Lys343. N6-succinyllysine is present on Lys350.

Belongs to the isocitrate and isopropylmalate dehydrogenases family. In terms of assembly, heterooligomer of subunits alpha (IDH3A), beta (IDH3B), and gamma (IDH3G) in the apparent ratio of 2:1:1. The heterodimer containing one IDH3A and one IDH3B subunit and the heterodimer containing one IDH3A and one IDH3G subunit assemble into a heterotetramer (which contains two subunits of IDH3A, one of IDH3B and one of IDH3G) and further into the heterooctamer. Requires Mg(2+) as cofactor. Mn(2+) is required as a cofactor.

Its subcellular location is the mitochondrion. The catalysed reaction is D-threo-isocitrate + NAD(+) = 2-oxoglutarate + CO2 + NADH. With respect to regulation, the heterotetramer and the heterodimer composed of IDH3A and IDH3G subunits can be allosterically activated by citrate (CIT) or/and ADP, and the two activators can act independently or synergistically. The heterodimer composed of IDH3A and IDH3B subunits cannot be allosterically regulated and the allosteric regulation of the heterotetramer is through the IDH3G subunit and not the IDH3B subunit. The IDH3G subunit contains the allosteric site which consists of a CIT-binding site and an ADP-binding site, and the binding of CIT and ADP causes conformational changes at the allosteric site which are transmitted to the active site in the catalytic subunit (IDH3A) through a cascade of conformational changes at the heterodimer interface, leading to stabilization of the isocitrate-binding at the active site and thus activation of the enzyme. ATP can activate the heterotetramer and the heterodimer composed of IDH3A and IDH3G subunits at low concentrations but inhibits their activities at high concentrations, whereas ATP exhibits only inhibitory effect on the heterodimer composed of IDH3A and IDH3B subunits. Catalytic subunit of the enzyme which catalyzes the decarboxylation of isocitrate (ICT) into alpha-ketoglutarate. The heterodimer composed of the alpha (IDH3A) and beta (IDH3B) subunits and the heterodimer composed of the alpha (IDH3A) and gamma (IDH3G) subunits, have considerable basal activity but the full activity of the heterotetramer (containing two subunits of IDH3A, one of IDH3B and one of IDH3G) requires the assembly and cooperative function of both heterodimers. The protein is Isocitrate dehydrogenase [NAD] subunit alpha, mitochondrial (IDH3A) of Sus scrofa (Pig).